A 484-amino-acid chain; its full sequence is Cobyric acid synthase (484 aa).

The GATase cobBQ-type domain maps to alanine 251–tyrosine 438. The active-site Nucleophile is the cysteine 333. Histidine 430 is an active-site residue.

The protein belongs to the CobB/CobQ family. CobQ subfamily.

The protein operates within cofactor biosynthesis; adenosylcobalamin biosynthesis. Its function is as follows. Catalyzes amidations at positions B, D, E, and G on adenosylcobyrinic A,C-diamide. NH(2) groups are provided by glutamine, and one molecule of ATP is hydrogenolyzed for each amidation. This is Cobyric acid synthase from Rhizobium etli (strain ATCC 51251 / DSM 11541 / JCM 21823 / NBRC 15573 / CFN 42).